The following is a 227-amino-acid chain: Isopentenyl-diphosphate Delta-isomerase 1 (227 aa).

Lysine 36 lines the substrate pocket. Mg(2+)-binding residues include histidine 40 and histidine 51. In terms of domain architecture, Nudix hydrolase spans leucine 49–isoleucine 199. Substrate contacts are provided by arginine 70 and lysine 74. Cysteine 86 is an active-site residue. Position 87 (serine 87) interacts with substrate. Mg(2+)-binding residues include glutamate 146 and glutamate 148. Glutamate 148 is a catalytic residue. Residue lysine 176 is modified to N6-acetyllysine. Positions tyrosine 225 to isoleucine 227 match the Microbody targeting signal motif.

It belongs to the IPP isomerase type 1 family. As to quaternary structure, monomer. It depends on Mg(2+) as a cofactor.

Its subcellular location is the peroxisome. It carries out the reaction isopentenyl diphosphate = dimethylallyl diphosphate. It functions in the pathway isoprenoid biosynthesis; dimethylallyl diphosphate biosynthesis; dimethylallyl diphosphate from isopentenyl diphosphate: step 1/1. In terms of biological role, catalyzes the 1,3-allylic rearrangement of the homoallylic substrate isopentenyl (IPP) to its highly electrophilic allylic isomer, dimethylallyl diphosphate (DMAPP). This is Isopentenyl-diphosphate Delta-isomerase 1 (IDI1) from Pongo abelii (Sumatran orangutan).